The following is a 414-amino-acid chain: COUP transcription factor 2 (414 aa).

Residues 1–72 (MAMVVSTWRD…PGGPGSDKQQ (72 aa)) are disordered. A compositionally biased stretch (pro residues) spans 27–37 (PPVPGPPPGAP). Residues 38 to 57 (HTPQTPGQGGPASTPAQTAA) are compositionally biased toward low complexity. At Thr-51 the chain carries Phosphothreonine. The segment covering 58-67 (GGQGGPGGPG) has biased composition (gly residues). Residues 76 to 151 (HIECVVCGDK…VGMRREAVQR (76 aa)) constitute a DNA-binding region (nuclear receptor). 2 consecutive NR C4-type zinc fingers follow at residues 79-99 (CVVC…CEGC) and 115-139 (CRAN…LKKC). The interval 117–414 (ANRNCPIDQH…SFNWPYMAIQ (298 aa)) is interaction with ZFPM2. In terms of domain architecture, NR LBD spans 177 to 403 (YLSGYISLLL…TLIRDMLLSG (227 aa)). Residues 337–414 (LQEKSQCALE…SFNWPYMAIQ (78 aa)) form an important for dimerization region.

The protein belongs to the nuclear hormone receptor family. NR2 subfamily. In terms of assembly, interacts with SQSTM1. Binds DNA as a dimer; homodimer or heterodimer with NR2F6. Interacts with NCOA1, NCOA2, NCOA3 and PPARGC1A. Interacts with ZFPM2. Ubiquitous. Expressed in the stromal cells of developing fetal ovaries.

It is found in the nucleus. Its function is as follows. Ligand-activated transcription factor. Activated by high concentrations of 9-cis-retinoic acid and all-trans-retinoic acid, but not by dexamethasone, cortisol or progesterone (in vitro). Regulation of the apolipoprotein A-I gene transcription. Binds to DNA site A. May be required to establish ovary identity during early gonad development. In Homo sapiens (Human), this protein is COUP transcription factor 2 (NR2F2).